We begin with the raw amino-acid sequence, 485 residues long: MMIPVILSGGSGSRLWPLSRKQFPKQFLALTGEHTLFQQTIERLVFEGMDTPIVVCNKDHKFIVQEQLAALKLETQGILMEPFGRNTAPAVAMAAMKLVNEGRDELMLVLPADHVIDDQKALQRALALATVAAERGEMVLFGVPATKPETGYGYIRSSQDALLPEGVARVAQFVEKPDEKRAAEFVQAGGYFWNSGMFLFRASRFLEELKKHDGDIYDTCVLALERSQEDGDVLSIDEATFACCPDNSIDYAVMEKTQRACVVPMSAGWSDVGCWSSLWEVHEKDDNGNVTKGDVVVQDSRNCMIHGNGKLVSVIGLENIVVVETKDAMMIAHKDKVQGVKQMVKTLDEQGRTETQNHLEVYRPWGSYDSVDMGGRFQVKHITVKPGASLSLQMHHHRAEHWIVVSGTAEVTCDENVFLLTENQSTYIPIASVHRLRNPGKIPLEIIEVQSGSYLGEDDIERFEDVYGRTSTPIERGVSVKTIAQ.

Belongs to the mannose-6-phosphate isomerase type 2 family. Monomer. Requires Co(2+) as cofactor.

The catalysed reaction is D-mannose 6-phosphate = D-fructose 6-phosphate. It catalyses the reaction alpha-D-mannose 1-phosphate + GTP + H(+) = GDP-alpha-D-mannose + diphosphate. The protein operates within nucleotide-sugar biosynthesis; GDP-alpha-D-mannose biosynthesis; GDP-alpha-D-mannose from alpha-D-mannose 1-phosphate (GTP route): step 1/1. It functions in the pathway nucleotide-sugar biosynthesis; GDP-alpha-D-mannose biosynthesis; alpha-D-mannose 1-phosphate from D-fructose 6-phosphate: step 1/2. Its function is as follows. Produces a precursor for alginate polymerization. The alginate layer provides a protective barrier against host immune defenses and antibiotics. The protein is Alginate biosynthesis protein AlgA (algA) of Pseudomonas putida (strain ATCC 47054 / DSM 6125 / CFBP 8728 / NCIMB 11950 / KT2440).